Reading from the N-terminus, the 1004-residue chain is Translation initiation factor IF-2 (1004 aa).

Positions 36-393 are disordered; sequence SSTIEPPVVK…RQKRNEYESM (358 aa). Composition is skewed to low complexity over residues 62–157 and 173–183; these read AAKP…AKPA and AAKPGAEAPRP. Pro residues-rich tracts occupy residues 184 to 196 and 219 to 236; these read GGMP…PAPK and PRPG…PGGG. Gly residues-rich tracts occupy residues 237–249 and 261–277; these read PRPQ…GGQR and GNRG…GPRP. Over residues 279–303 the composition is skewed to low complexity; that stretch reads GGPRPQGGSRPQGGSAQGAQGAPSQ. The span at 330–373 shows a compositional bias: gly residues; that stretch reads GKGGRGGQAGGGAGGGFNRGGGTGGGAGRGGRRGGTAGAFGRPG. The span at 377-386 shows a compositional bias: basic residues; the sequence is RRGRKSKRQK. Positions 499–671 constitute a tr-type G domain; that stretch reads KRPPVVTVMG…VCLTADAELD (173 aa). A G1 region spans residues 508-515; the sequence is GHVDHGKT. 508–515 contacts GTP; it reads GHVDHGKT. The interval 533 to 537 is G2; sequence GITQG. The tract at residues 558–561 is G3; sequence DTPG. Residues 558–562 and 612–615 each bind GTP; these read DTPGH and NKID. The interval 612–615 is G4; that stretch reads NKID. Residues 648–650 are G5; it reads SAK.

This sequence belongs to the TRAFAC class translation factor GTPase superfamily. Classic translation factor GTPase family. IF-2 subfamily.

It is found in the cytoplasm. Its function is as follows. One of the essential components for the initiation of protein synthesis. Protects formylmethionyl-tRNA from spontaneous hydrolysis and promotes its binding to the 30S ribosomal subunits. Also involved in the hydrolysis of GTP during the formation of the 70S ribosomal complex. This chain is Translation initiation factor IF-2, found in Corynebacterium glutamicum (strain ATCC 13032 / DSM 20300 / JCM 1318 / BCRC 11384 / CCUG 27702 / LMG 3730 / NBRC 12168 / NCIMB 10025 / NRRL B-2784 / 534).